Here is a 122-residue protein sequence, read N- to C-terminus: Large ribosomal subunit protein uL14 (122 aa).

This sequence belongs to the universal ribosomal protein uL14 family. As to quaternary structure, part of the 50S ribosomal subunit. Forms a cluster with proteins L3 and L19. In the 70S ribosome, L14 and L19 interact and together make contacts with the 16S rRNA in bridges B5 and B8.

Its function is as follows. Binds to 23S rRNA. Forms part of two intersubunit bridges in the 70S ribosome. This Streptococcus uberis (strain ATCC BAA-854 / 0140J) protein is Large ribosomal subunit protein uL14.